A 130-amino-acid polypeptide reads, in one-letter code: Glycine cleavage system H protein (130 aa).

One can recognise a Lipoyl-binding domain in the interval 25–107 (IATIGITEFA…YGEGWFLKVR (83 aa)). Position 66 is an N6-lipoyllysine (Lys66).

Belongs to the GcvH family. In terms of assembly, the glycine cleavage system is composed of four proteins: P, T, L and H. (R)-lipoate is required as a cofactor.

In terms of biological role, the glycine cleavage system catalyzes the degradation of glycine. The H protein shuttles the methylamine group of glycine from the P protein to the T protein. The sequence is that of Glycine cleavage system H protein from Trichormus variabilis (strain ATCC 29413 / PCC 7937) (Anabaena variabilis).